A 466-amino-acid chain; its full sequence is E3 SUMO-protein ligase TRIM60 (466 aa).

Residues 15 to 56 form an RING-type zinc finger; sequence CYICSDFMEDPVTSRCGHNFCFACLRLLWDDLQGNIFCPVCQ. The B box-type zinc-finger motif lies at 91–132; the sequence is EEHTVCPKHDQPLVLFCVRDRDVLCTQCSLSVEHQGHYTCPI. Residues Cys-96, His-99, Cys-118, and His-124 each contribute to the Zn(2+) site. Positions 171–223 form a coiled coil; it reads LREEAQYQKIEIRYEIGQIKLFLQSEYEAHLNESHMEELRSFSELNGYLETLL. The B30.2/SPRY domain maps to 272–462; it reads LSLPAQYSGL…LEILTHPTPD (191 aa).

This sequence belongs to the TRIM/RBCC family.

In terms of biological role, E3 SUMO-protein ligase that mediates SUMOylation of TAB2 leading to inhibition of NF-kappa-B and MAPK pathways by suppressing the TRAF6/TAB2/TAK1 complex. In Mus musculus (Mouse), this protein is E3 SUMO-protein ligase TRIM60 (Trim60).